The sequence spans 275 residues: Lectin (275 aa).

A signal peptide spans 1–30 (MASLQTQMISFYAIFLSILLTTILFFKVNS). The Mn(2+) site is built by glutamate 149 and aspartate 151. Aspartate 151, phenylalanine 153, asparagine 155, and aspartate 159 together coordinate Ca(2+). Residues aspartate 159 and histidine 166 each contribute to the Mn(2+) site. Asparagine 217 carries an N-linked (GlcNAc...) asparagine glycan.

Belongs to the leguminous lectin family. Tetramer of two alpha and two beta chains.

Functionally, D-mannose specific lectin. This is Lectin (LECA) from Pisum sativum (Garden pea).